The chain runs to 355 residues: Methylthioribose-1-phosphate isomerase (355 aa).

Substrate-binding positions include 50–52 (RGA), Arg93, and Gln198. Asp239 functions as the Proton donor in the catalytic mechanism. 249-250 (NK) is a binding site for substrate.

Belongs to the eIF-2B alpha/beta/delta subunits family. MtnA subfamily. In terms of assembly, homodimer.

The catalysed reaction is 5-(methylsulfanyl)-alpha-D-ribose 1-phosphate = 5-(methylsulfanyl)-D-ribulose 1-phosphate. Its pathway is amino-acid biosynthesis; L-methionine biosynthesis via salvage pathway; L-methionine from S-methyl-5-thio-alpha-D-ribose 1-phosphate: step 1/6. Functionally, catalyzes the interconversion of methylthioribose-1-phosphate (MTR-1-P) into methylthioribulose-1-phosphate (MTRu-1-P). In Geobacillus thermodenitrificans (strain NG80-2), this protein is Methylthioribose-1-phosphate isomerase.